Reading from the N-terminus, the 139-residue chain is MSYCRQEGKDRIIFVTKEDHETPSSAELVADDPNDPYEEHGLILPNGDINWNCPCLGGMASGPCGEQFKSAFSCFHYSTEDIKGSDCIDQFRAMQECMQKYPDLYPQDEEEEEEAKPVEPVEETADTKASAAKEQGASS.

Disulfide bonds link C53/C55, C64/C97, and C74/C87. A CHCH domain is found at 61–105; sequence SGPCGEQFKSAFSCFHYSTEDIKGSDCIDQFRAMQECMQKYPDLY. Short sequence motifs (cx9C motif) lie at residues 64-74 and 87-97; these read CGEQFKSAFSC and CIDQFRAMQEC. Residues 104 to 139 are disordered; it reads LYPQDEEEEEEAKPVEPVEETADTKASAAKEQGASS. Over residues 106 to 124 the composition is skewed to acidic residues; the sequence is PQDEEEEEEAKPVEPVEET.

As to quaternary structure, monomer. Can form homooligomers. Interacts with GFER and forms transient disulfide bonds with GFER. Interacts with MICU1. Interacts with COX19 forming transient intermolecular disulfide bridges. Interacts with COA7 through transient intermolecular disulfide bonds. Interacts with AIFM1; the interaction increases in presence of NADH. Interacts with NDUFB10. Post-translationally, forms intrachain disulfide bridges, but exists in different redox states.

Its subcellular location is the mitochondrion intermembrane space. Functionally, central component of a redox-sensitive mitochondrial intermembrane space import machinery which is required for the biogenesis of respiratory chain complexes. Functions as a chaperone and catalyzes the formation of disulfide bonds in substrate proteins, such as COX17, COX19, MICU1 and COA7. Required for the import and folding of small cysteine-containing proteins (small Tim) in the mitochondrial intermembrane space (IMS). Required for the import of COA7 in the IMS. Precursor proteins to be imported into the IMS are translocated in their reduced form into the mitochondria. The oxidized form of CHCHD4/MIA40 forms a transient intermolecular disulfide bridge with the reduced precursor protein, resulting in oxidation of the precursor protein that now contains an intramolecular disulfide bond and is able to undergo folding in the IMS. Reduced CHCHD4/MIA40 is then reoxidized by GFER/ERV1 via a disulfide relay system. Mediates formation of disulfide bond in MICU1 in the IMS, promoting formation of the MICU1-MICU2 heterodimer that regulates mitochondrial calcium uptake. The protein is Mitochondrial intermembrane space import and assembly protein 40 (Chchd4) of Rattus norvegicus (Rat).